The sequence spans 189 residues: Small ribosomal subunit protein uS5 (189 aa).

The S5 DRBM domain occupies phenylalanine 20 to valine 83.

Belongs to the universal ribosomal protein uS5 family. In terms of assembly, part of the 30S ribosomal subunit. Contacts proteins S4 and S8.

With S4 and S12 plays an important role in translational accuracy. Its function is as follows. Located at the back of the 30S subunit body where it stabilizes the conformation of the head with respect to the body. The polypeptide is Small ribosomal subunit protein uS5 (Beijerinckia indica subsp. indica (strain ATCC 9039 / DSM 1715 / NCIMB 8712)).